Consider the following 265-residue polypeptide: MDYKEEQKQELEVLESIYPDELRIINDEYPKIKFEVAIKLELDTGDSTSVLTKEHTIIAEFKLPENYPDEPCLISLEAQEVALNDNEEDNEEDEDEVEYDDHGNKVLKKFENLPDLISFKGYLPELTVQLESQIETDMLLGMQMCFALISSIKERCEQWYSEQLNKLEKQYELEAQEREKKEQAKFHGTKVTRESYLEWRSKFRQELKLDERDQVRRMKAHHGKLTGKQMFEQGVVGTGDEYMEEDDASVDDVAKGLAKTEIANQ.

In terms of domain architecture, RWD spans 9–159 (QELEVLESIY…SSIKERCEQW (151 aa)).

It belongs to the RWDD1/GIR2 family. As to quaternary structure, interacts with GCN1; this interaction prevents the interaction of GCN1 with GCN2 protein kinase and GCN2 activation in amino acid-starved cells. Interacts with RBG1. Associates with ribosomes; the association occurs in a GCN1-dependent manner.

Functionally, acts as a negative regulator of the GCN2 kinase activity by disrupting the GCN1-GCN2 interaction in amino acid-starved cells. The polypeptide is Protein GIR2 (GIR2) (Saccharomyces cerevisiae (strain ATCC 204508 / S288c) (Baker's yeast)).